Here is a 68-residue protein sequence, read N- to C-terminus: Protein SlyX homolog (68 aa).

Belongs to the SlyX family.

This chain is Protein SlyX homolog, found in Brucella suis (strain ATCC 23445 / NCTC 10510).